A 249-amino-acid polypeptide reads, in one-letter code: Small ribosomal subunit protein uS2 (249 aa).

Belongs to the universal ribosomal protein uS2 family.

The protein is Small ribosomal subunit protein uS2 of Listeria innocua serovar 6a (strain ATCC BAA-680 / CLIP 11262).